An 85-amino-acid chain; its full sequence is MAHKKAGGSTKNGRDSESKRLGVKRFGGESVLAGNILVRQRGTKFHAGANVGIGKDHTLFATSEGKVSFDVKGSKNRKFVSVITD.

Residues 1-22 form a disordered region; it reads MAHKKAGGSTKNGRDSESKRLG.

This sequence belongs to the bacterial ribosomal protein bL27 family.

The chain is Large ribosomal subunit protein bL27 from Idiomarina loihiensis (strain ATCC BAA-735 / DSM 15497 / L2-TR).